Consider the following 202-residue polypeptide: GTP cyclohydrolase 1 (202 aa).

Residues Cys-93, His-96, and Cys-164 each contribute to the Zn(2+) site.

This sequence belongs to the GTP cyclohydrolase I family. In terms of assembly, toroid-shaped homodecamer, composed of two pentamers of five dimers.

The enzyme catalyses GTP + H2O = 7,8-dihydroneopterin 3'-triphosphate + formate + H(+). It functions in the pathway cofactor biosynthesis; 7,8-dihydroneopterin triphosphate biosynthesis; 7,8-dihydroneopterin triphosphate from GTP: step 1/1. The polypeptide is GTP cyclohydrolase 1 (Pelagibacter ubique (strain HTCC1062)).